A 367-amino-acid polypeptide reads, in one-letter code: Undecaprenyl-phosphate alpha-N-acetylglucosaminyl 1-phosphate transferase (367 aa).

Helical transmembrane passes span 3 to 23 (LLTA…FIFL), 45 to 65 (GVIP…MFGL), 69 to 89 (YIPH…VGAM), 129 to 149 (WELV…WAAI), 158 to 178 (IDGL…LILW), 187 to 207 (MWCF…LGIL), 213 to 233 (VFMG…LLLE), 242 to 262 (ISPV…VAIM), and 318 to 338 (VPEW…GYCI).

Belongs to the glycosyltransferase 4 family. WecA subfamily. Requires Mg(2+) as cofactor. Mn(2+) is required as a cofactor.

Its subcellular location is the cell inner membrane. It catalyses the reaction di-trans,octa-cis-undecaprenyl phosphate + UDP-N-acetyl-alpha-D-glucosamine = N-acetyl-alpha-D-glucosaminyl-di-trans,octa-cis-undecaprenyl diphosphate + UMP. The protein operates within bacterial outer membrane biogenesis; LPS O-antigen biosynthesis. It participates in bacterial outer membrane biogenesis; enterobacterial common antigen biosynthesis. With respect to regulation, inhibited by tunicamycin. In terms of biological role, catalyzes the transfer of the GlcNAc-1-phosphate moiety from UDP-GlcNAc onto the carrier lipid undecaprenyl phosphate (C55-P), yielding GlcNAc-pyrophosphoryl-undecaprenyl (GlcNAc-PP-C55). This Salmonella typhimurium (strain LT2 / SGSC1412 / ATCC 700720) protein is Undecaprenyl-phosphate alpha-N-acetylglucosaminyl 1-phosphate transferase.